We begin with the raw amino-acid sequence, 512 residues long: Maturase K (512 aa).

This sequence belongs to the intron maturase 2 family. MatK subfamily.

The protein resides in the plastid. It localises to the chloroplast. Its function is as follows. Usually encoded in the trnK tRNA gene intron. Probably assists in splicing its own and other chloroplast group II introns. This Amorphophallus abyssinicus (Black arum) protein is Maturase K.